A 7481-amino-acid polypeptide reads, in one-letter code: Polyketide synthase GfsA (7481 aa).

The loading module (LM) stretch occupies residues Ala24–Leu1020. One can recognise a Ketosynthase family 3 (KS3) 1 domain in the interval Asp26 to Ala451. Positions Arg60 to Ala80 are disordered. Gln197 (for decarboxylation activity of LM) is an active-site residue. The active-site For acyltransferase activity of LM is the Ser662. Residues Pro945–Leu1020 enclose the Carrier 1 domain. Ser980 is subject to O-(pantetheine 4'-phosphoryl)serine. Residues Asp1038–Gln1454 form the Ketosynthase family 3 (KS3) 2 domain. 4 module regions span residues Asp1038 to Leu2517, Glu2538 to Ile4063, Asp4084 to Val5636, and Asp5655 to Leu7400. Active-site for beta-ketoacyl synthase 1 activity residues include Cys1201, His1336, and His1376. Positions Arg2442–Leu2517 constitute a Carrier 2 domain. Position 2477 is an O-(pantetheine 4'-phosphoryl)serine (Ser2477). Residues Glu2538–Glu2964 enclose the Ketosynthase family 3 (KS3) 3 domain. Catalysis depends on for beta-ketoacyl synthase 2 activity residues Cys2711, His2846, and His2886. Residues Gln3988–Ile4063 enclose the Carrier 3 domain. At Ser4023 the chain carries O-(pantetheine 4'-phosphoryl)serine. Residues Asp4084–Gln4514 enclose the Ketosynthase family 3 (KS3) 4 domain. Catalysis depends on for beta-ketoacyl synthase 3 activity residues Cys4261, His4396, and His4436. The Carrier 4 domain maps to Thr5561–Val5636. Ser5596 bears the O-(pantetheine 4'-phosphoryl)serine mark. Residues Asp5655 to Gln6081 enclose the Ketosynthase family 3 (KS3) 5 domain. Residues Cys5828, His5963, and His6003 each act as for beta-ketoacyl synthase 4 activity in the active site. The tract at residues His6561–Val6685 is N-terminal hotdog fold. A PKS/mFAS DH domain is found at His6561 to Ala6841. Catalysis depends on His6593, which acts as the Proton acceptor; for dehydratase activity. The segment at Ala6700–Ala6841 is C-terminal hotdog fold. Catalysis depends on Asp6761, which acts as the Proton donor; for dehydratase activity. One can recognise a Carrier 5 domain in the interval Gln7325–Leu7400. Ser7360 is modified (O-(pantetheine 4'-phosphoryl)serine).

Homodimer. The loading module (LM, residues 13-926) dimerizes. LM cross-links to its cognate acyl-carrier domain in a manner that seems physiological; mutation of residues in the 2 domains alters reactions efficiency in a manner predicted by the cross-linked crystal. The cofactor is pantetheine 4'-phosphate.

Its pathway is antibiotic biosynthesis. First protein in the synthesis of the 16-membered macrolide antibiotics FD-891 and FD-892. Composed of 5 modules; the first is a loading module (LM) that synthesizes a starter unit used by the first elongation module for polyketide chain elongation. The starter unit is extended by multiple rounds of addition of malonyl-CoA or methylmalonyl-CoA, and other modifications to help generate the final products. The loading module (residues 1-927, LM with an inactive acyltransferase domain) preferentially decarboxylates malonyl-GfsA acyl carrier protein of the LM (ACP-LM) over methylmalonyl-GfsA ACP-LM and has no activity on malonyl-CoA or methymalonyl-CoA. LM decarboxylates malonyl-ACP-LM better than the malonyl-ACP-1 module of GfsA (i.e. the next module in the same protein) and has no activity on other malonyl-ACP modules. This Streptomyces halstedii protein is Polyketide synthase GfsA.